A 155-amino-acid chain; its full sequence is Ribonuclease H (155 aa).

An RNase H type-1 domain is found at 1-142; that stretch reads MLKQVEIFTD…CDELARAAAS (142 aa). Mg(2+) is bound by residues Asp-10, Glu-48, Asp-70, and Asp-134.

It belongs to the RNase H family. Monomer. Requires Mg(2+) as cofactor.

It localises to the cytoplasm. It carries out the reaction Endonucleolytic cleavage to 5'-phosphomonoester.. Endonuclease that specifically degrades the RNA of RNA-DNA hybrids. This is Ribonuclease H from Klebsiella pneumoniae subsp. pneumoniae (strain ATCC 700721 / MGH 78578).